The chain runs to 338 residues: Uroporphyrinogen decarboxylase (338 aa).

Substrate-binding positions include 25 to 29 (RQAGR), Phe-44, Asp-75, Tyr-146, Ser-201, and His-314.

Belongs to the uroporphyrinogen decarboxylase family. As to quaternary structure, homodimer.

It is found in the cytoplasm. It carries out the reaction uroporphyrinogen III + 4 H(+) = coproporphyrinogen III + 4 CO2. Its pathway is porphyrin-containing compound metabolism; protoporphyrin-IX biosynthesis; coproporphyrinogen-III from 5-aminolevulinate: step 4/4. Its function is as follows. Catalyzes the decarboxylation of four acetate groups of uroporphyrinogen-III to yield coproporphyrinogen-III. The sequence is that of Uroporphyrinogen decarboxylase from Aquifex aeolicus (strain VF5).